The sequence spans 133 residues: Protein archease (133 aa).

Ca(2+) contacts are provided by aspartate 11, aspartate 132, and leucine 133.

The protein belongs to the archease family.

In terms of biological role, activates the tRNA-splicing ligase complex by facilitating the enzymatic turnover of catalytic subunit RtcB. Acts by promoting the guanylylation of RtcB, a key intermediate step in tRNA ligation. Can also alter the NTP specificity of RtcB such that ATP, dGTP or ITP is used efficiently. This is Protein archease from Thermoplasma volcanium (strain ATCC 51530 / DSM 4299 / JCM 9571 / NBRC 15438 / GSS1).